The following is an 855-amino-acid chain: Potassium channel AKT2 (855 aa).

Positions 1–12 (MKTSSFESASSS) are enriched in low complexity. A disordered region spans residues 1-24 (MKTSSFESASSSGGSGGGGGGGGG). Topologically, residues 1–75 (MKTSSFESAS…PLDSRYRCWD (75 aa)) are cytoplasmic. The span at 13 to 24 (GGSGGGGGGGGG) shows a compositional bias: gly residues. A helical membrane pass occupies residues 76 to 96 (TFMVVLVAYSAWVYPFEVAFM). Over 97–105 (NASPKGGLE) the chain is Extracellular. Residues 106 to 126 (VADIVVDLFFAVDIVLTFFVA) form a helical membrane-spanning segment. The Cytoplasmic segment spans residues 127-149 (YIDSRTQLLVRDRRRIATRYLST). A helical transmembrane segment spans residues 150-170 (FFIMDVASTIPFQGLAYIVTG). Over 171 to 179 (EVRESPAFS) the chain is Extracellular. The helical; Voltage-sensor transmembrane segment at 180–200 (LLGILRLWRLRKVKQFFTRLE) threads the bilayer. At 201-214 (KDIRFNYFWIRCAR) the chain is on the cytoplasmic side. A helical membrane pass occupies residues 215–235 (LIAVTLFLVHCAGCLYYLIAD). Residues 236 to 262 (RYPHREKTWIGAVIPDFQEASLWIRYT) are Extracellular-facing. The pore-forming intramembrane region spans 263-282 (SSVYWSITTMTTVGYGDMHA). Residues 283–285 (QNT) lie on the Extracellular side of the membrane. The helical transmembrane segment at 286–306 (VEMIFNIFYMLFNLGLTAYLI) threads the bilayer. The Cytoplasmic portion of the chain corresponds to 307-855 (GNMTNLVVEG…VASMDSVSGS (549 aa)). Residue 391–511 (LFKGVSREVL…VVIIKNFLKH (121 aa)) participates in a nucleoside 3',5'-cyclic phosphate binding. ANK repeat units follow at residues 536–565 (NIPC…DPDV), 569–598 (KGRT…NVNI), 602–631 (QGNT…VSSP), 634–663 (AAGD…AVDS), and 667–696 (DGAT…SVDR). The tract at residues 744–765 (EVGSSGDSRNGRRQSARSDGAH) is disordered. A KHA domain is found at 768 to 855 (RVSIYRGHPF…VASMDSVSGS (88 aa)).

Belongs to the potassium channel family. Plant (TC 1.A.1.4) subfamily. As to quaternary structure, the potassium channel is probably a homo- or heterotetrameric complex of pore-forming subunits.

Its subcellular location is the membrane. In terms of biological role, probable inward-rectifying potassium channel. Assuming opened or closed conformations in response to the voltage difference across the membrane, the channel is activated by hyperpolarization. In Oryza sativa subsp. japonica (Rice), this protein is Potassium channel AKT2.